A 526-amino-acid polypeptide reads, in one-letter code: Tyrosine 2,3-aminomutase (526 aa).

Tyrosine 41 serves as the catalytic Proton donor/acceptor. Residue histidine 71 participates in substrate binding. The 5-imidazolinone (Ala-Gly) cross-link spans 130–132; it reads ASG. Serine 131 is modified (2,3-didehydroalanine (Ser)). Substrate contacts are provided by asparagine 183 and arginine 288.

This sequence belongs to the TAL/TAM family. As to quaternary structure, homotetramer; dimer of dimers. Contains an active site 4-methylidene-imidazol-5-one (MIO), which is formed autocatalytically by cyclization and dehydration of residues Ala-Ser-Gly.

It carries out the reaction L-tyrosine = 3-amino-3-(4-hydroxyphenyl)propanoate. The enzyme catalyses L-tyrosine = (E)-4-coumarate + NH4(+). Has aminomutase and, to a much lesser extent, ammonia-lyase activity. Primarily, catalyzes the rearrangement of L-tyrosine to S-beta-tyrosine, which is probably incorporated into secondary metabolite myxovalargin. The aminomutase activity exclusively produces S-beta-tyrosine. This Myxococcus fulvus protein is Tyrosine 2,3-aminomutase.